Reading from the N-terminus, the 888-residue chain is Kinesin-like protein KIF20A (888 aa).

Serine 2 is modified (N-acetylserine). Phosphoserine is present on residues serine 7, serine 14, and serine 21. A Kinesin motor domain is found at 63–506; it reads KVKVYLRVRP…AKFSAIASQL (444 aa). 159 to 166 contacts ATP; the sequence is GVTNSGKT. Phosphoserine; by PLK1 is present on serine 527. Serine 531 carries the post-translational modification Phosphoserine. Coiled-coil stretches lie at residues 559–587 and 630–760; these read KEELLQVVEAMKALLLKERQEKLRLEVQL and ESLT…ERAC. Serine 667, serine 683, and serine 823 each carry phosphoserine. Positions 761-888 are globular; the sequence is CHNTGAGKLR…LKSGPFGKKY (128 aa). A disordered region spans residues 823-863; that stretch reads STKKRLGANQENQQPNQQPPGKKPFLRNLLPRTPTCQSSTD. Residue threonine 855 is modified to Phosphothreonine. Residues serine 865, serine 876, and serine 881 each carry the phosphoserine modification.

Belongs to the TRAFAC class myosin-kinesin ATPase superfamily. Kinesin family. In terms of processing, phosphorylated by PLK1 at Ser-527 during mitosis, creating a docking site for PLK1 and recruiting PLK1 at central spindle.

It is found in the golgi apparatus. Its subcellular location is the cytoplasm. It localises to the cytoskeleton. The protein resides in the spindle. In terms of biological role, mitotic kinesin required for chromosome passenger complex (CPC)-mediated cytokinesis. Following phosphorylation by PLK1, involved in recruitment of PLK1 to the central spindle. Interacts with guanosine triphosphate (GTP)-bound forms of RAB6A and RAB6B. May act as a motor required for the retrograde RAB6 regulated transport of Golgi membranes and associated vesicles along microtubules. Has a microtubule plus end-directed motility. The chain is Kinesin-like protein KIF20A (KIF20A) from Bos taurus (Bovine).